The primary structure comprises 799 residues: Valine--tRNA ligase (799 aa).

Lysine 536 is an ATP binding site.

Belongs to the class-I aminoacyl-tRNA synthetase family. ValS type 2 subfamily.

It localises to the cytoplasm. It carries out the reaction tRNA(Val) + L-valine + ATP = L-valyl-tRNA(Val) + AMP + diphosphate. In terms of biological role, catalyzes the attachment of valine to tRNA(Val). As ValRS can inadvertently accommodate and process structurally similar amino acids such as threonine, to avoid such errors, it has a 'posttransfer' editing activity that hydrolyzes mischarged Thr-tRNA(Val) in a tRNA-dependent manner. This is Valine--tRNA ligase (valS) from Pyrobaculum aerophilum (strain ATCC 51768 / DSM 7523 / JCM 9630 / CIP 104966 / NBRC 100827 / IM2).